The chain runs to 342 residues: Dihydroorotase (342 aa).

The Zn(2+) site is built by H13 and H15. Residues 15–17 (HLR) and N41 each bind substrate. Residues K98, H135, and H173 each contribute to the Zn(2+) site. An N6-carboxylysine modification is found at K98. H135 is a substrate binding site. Substrate is bound at residue L218. D246 contributes to the Zn(2+) binding site. Residue D246 is part of the active site. H250 and A262 together coordinate substrate.

This sequence belongs to the metallo-dependent hydrolases superfamily. DHOase family. Class II DHOase subfamily. Homodimer. The cofactor is Zn(2+).

It catalyses the reaction (S)-dihydroorotate + H2O = N-carbamoyl-L-aspartate + H(+). It participates in pyrimidine metabolism; UMP biosynthesis via de novo pathway; (S)-dihydroorotate from bicarbonate: step 3/3. Its function is as follows. Catalyzes the reversible cyclization of carbamoyl aspartate to dihydroorotate. This chain is Dihydroorotase, found in Vibrio cholerae serotype O1 (strain ATCC 39315 / El Tor Inaba N16961).